A 352-amino-acid polypeptide reads, in one-letter code: Ferrochelatase (352 aa).

Residues histidine 222 and glutamate 303 each contribute to the Fe cation site.

The protein belongs to the ferrochelatase family.

The protein resides in the cytoplasm. It catalyses the reaction heme b + 2 H(+) = protoporphyrin IX + Fe(2+). The protein operates within porphyrin-containing compound metabolism; protoheme biosynthesis; protoheme from protoporphyrin-IX: step 1/1. Its function is as follows. Catalyzes the ferrous insertion into protoporphyrin IX. The polypeptide is Ferrochelatase (Brucella abortus (strain S19)).